Consider the following 642-residue polypeptide: Threonine--tRNA ligase (642 aa).

The TGS domain occupies 1-63; sequence MSEIVVTLPD…TDDCELVIVT (63 aa). The interval 242–533 is catalytic; that stretch reads DHRKLGQELD…LIEHFDGNFP (292 aa). The Zn(2+) site is built by Cys-334, His-385, and His-510.

The protein belongs to the class-II aminoacyl-tRNA synthetase family. In terms of assembly, homodimer. Zn(2+) is required as a cofactor.

Its subcellular location is the cytoplasm. The catalysed reaction is tRNA(Thr) + L-threonine + ATP = L-threonyl-tRNA(Thr) + AMP + diphosphate + H(+). Its function is as follows. Catalyzes the attachment of threonine to tRNA(Thr) in a two-step reaction: L-threonine is first activated by ATP to form Thr-AMP and then transferred to the acceptor end of tRNA(Thr). The protein is Threonine--tRNA ligase of Natronomonas pharaonis (strain ATCC 35678 / DSM 2160 / CIP 103997 / JCM 8858 / NBRC 14720 / NCIMB 2260 / Gabara) (Halobacterium pharaonis).